The chain runs to 117 residues: Holo-[acyl-carrier-protein] synthase (117 aa).

Aspartate 8 and glutamate 58 together coordinate Mg(2+).

The protein belongs to the P-Pant transferase superfamily. AcpS family. Mg(2+) is required as a cofactor.

It localises to the cytoplasm. The enzyme catalyses apo-[ACP] + CoA = holo-[ACP] + adenosine 3',5'-bisphosphate + H(+). In terms of biological role, transfers the 4'-phosphopantetheine moiety from coenzyme A to a Ser of acyl-carrier-protein. The protein is Holo-[acyl-carrier-protein] synthase of Shouchella clausii (strain KSM-K16) (Alkalihalobacillus clausii).